Reading from the N-terminus, the 512-residue chain is Lysine--tRNA ligase (512 aa).

Mg(2+)-binding residues include Glu408 and Glu415.

This sequence belongs to the class-II aminoacyl-tRNA synthetase family. In terms of assembly, homodimer. Mg(2+) is required as a cofactor.

Its subcellular location is the cytoplasm. The catalysed reaction is tRNA(Lys) + L-lysine + ATP = L-lysyl-tRNA(Lys) + AMP + diphosphate. In Prochlorococcus marinus subsp. pastoris (strain CCMP1986 / NIES-2087 / MED4), this protein is Lysine--tRNA ligase.